The primary structure comprises 217 residues: GKFIIPQIVKYSPNCIIIVVSNPVDILTYVTWKLSGLPKHRVIGSGCNLDSARFRYLMAEKLGIHPSSCHGWILGEHGDSRLAVWSGVNVAGVSLQELNPEMGTDNDSENWKEVHKMVVESAYEVIKLKGYTNWAIGLSVADLIESMLKNLSRIHPVSTMVRGMYGIESEVFLSLPCILNARGLTSVINQKLKDDEVAQLKKSADTLWDIQKDLKDL.

Asn-22 is an NAD(+) binding site. Substrate contacts are provided by Asn-22 and Arg-53. His-77 acts as the Proton acceptor in catalysis. Phosphotyrosine is present on Tyr-123. Thr-132 contacts substrate. Residue Lys-212 is modified to N6-acetyllysine.

This sequence belongs to the LDH/MDH superfamily. LDH family. In terms of assembly, homotetramer. Interacts with PTEN upstream reading frame protein MP31; the interaction leads to inhibition of mitochondrial lactate dehydrogenase activity, preventing conversion of lactate to pyruvate in mitochondria.

The protein localises to the cytoplasm. Its subcellular location is the mitochondrion inner membrane. The catalysed reaction is (S)-lactate + NAD(+) = pyruvate + NADH + H(+). It functions in the pathway fermentation; pyruvate fermentation to lactate; (S)-lactate from pyruvate: step 1/1. Its function is as follows. Interconverts simultaneously and stereospecifically pyruvate and lactate with concomitant interconversion of NADH and NAD(+). In Oryctolagus cuniculus (Rabbit), this protein is L-lactate dehydrogenase B chain (LDHB).